Reading from the N-terminus, the 179-residue chain is Large ribosomal subunit protein uL5 (179 aa).

It belongs to the universal ribosomal protein uL5 family. Part of the 50S ribosomal subunit; part of the 5S rRNA/L5/L18/L25 subcomplex. Contacts the 5S rRNA and the P site tRNA. Forms a bridge to the 30S subunit in the 70S ribosome.

Functionally, this is one of the proteins that bind and probably mediate the attachment of the 5S RNA into the large ribosomal subunit, where it forms part of the central protuberance. In the 70S ribosome it contacts protein S13 of the 30S subunit (bridge B1b), connecting the 2 subunits; this bridge is implicated in subunit movement. Contacts the P site tRNA; the 5S rRNA and some of its associated proteins might help stabilize positioning of ribosome-bound tRNAs. This chain is Large ribosomal subunit protein uL5, found in Aliivibrio salmonicida (strain LFI1238) (Vibrio salmonicida (strain LFI1238)).